The sequence spans 253 residues: MNKALSVENLGFYYQAENFLFQQLNFDLNKGDILAVLGQNGCGKSTLLDLLLGIHRPIQGKIEVYQSIGFVPQFFSSPFAYSVLDIVLMGRSTHINTFAKPKSHDYQVAMQALDYLNLTHLAKREFTSLSGGQRQLILIARAIASECKLILLDEPTSALDLANQDIVLSLLIDLAQSQNMTVVFTTHQPNQVVAIANKTLLLNKQNFKFGETRNILTSENLTALFHLPMFEQQAQYKESFFTHFVPLYKTLLK.

Residues 5–229 (LSVENLGFYY…NLTALFHLPM (225 aa)) form the ABC transporter domain. 38 to 45 (GQNGCGKS) contacts ATP.

The protein belongs to the ABC transporter superfamily. The complex is composed of two ATP-binding proteins (MolC), two transmembrane proteins (MolB) and a solute-binding protein (MolA).

The protein resides in the cell inner membrane. The enzyme catalyses molybdate(out) + ATP + H2O = molybdate(in) + ADP + phosphate + H(+). The MolBCA complex shows a decrease in affinity in the presence of increasing concentrations of substrate and nucleotide. In terms of biological role, part of the ABC transporter complex MolBCA involved in molybdate import. Responsible for energy coupling to the transport system. Functions as a low-affinity molybdate transporter. The polypeptide is Molybdate import ATP-binding protein MolC (Haemophilus influenzae (strain ATCC 51907 / DSM 11121 / KW20 / Rd)).